A 435-amino-acid chain; its full sequence is Enolase (435 aa).

Residue Gln163 participates in (2R)-2-phosphoglycerate binding. Glu205 functions as the Proton donor in the catalytic mechanism. Mg(2+)-binding residues include Asp243, Glu292, and Asp319. (2R)-2-phosphoglycerate contacts are provided by Lys344, Arg373, Ser374, and Lys395. The active-site Proton acceptor is Lys344.

It belongs to the enolase family. Mg(2+) is required as a cofactor.

It is found in the cytoplasm. The protein resides in the secreted. The protein localises to the cell surface. The catalysed reaction is (2R)-2-phosphoglycerate = phosphoenolpyruvate + H2O. It functions in the pathway carbohydrate degradation; glycolysis; pyruvate from D-glyceraldehyde 3-phosphate: step 4/5. Its function is as follows. Catalyzes the reversible conversion of 2-phosphoglycerate (2-PG) into phosphoenolpyruvate (PEP). It is essential for the degradation of carbohydrates via glycolysis. The protein is Enolase of Streptococcus suis (strain 98HAH33).